The chain runs to 334 residues: Malate dehydrogenase, cytoplasmic (334 aa).

Ser2 bears the N-acetylserine mark. NAD(+) contacts are provided by residues 11 to 17 (GAAGQIA) and Asp42. Residues Arg92 and Arg98 each contribute to the substrate site. An NAD(+)-binding site is contributed by Asn105. Lys110 is modified (N6-succinyllysine). Gln112 contacts NAD(+). An N6-acetyllysine mark is found at Lys118 and Lys121. 129–131 (VGN) contributes to the NAD(+) binding site. Residues Asn131 and Arg162 each contribute to the substrate site. Catalysis depends on His187, which acts as the Proton acceptor. Position 214 is an N6-succinyllysine (Lys214). Ser217 bears the Phosphoserine mark. At Arg230 the chain carries Omega-N-methylarginine. The residue at position 241 (Ser241) is a Phosphoserine. Lys298 is modified (N6-acetyllysine; alternate). Residue Lys298 is modified to N6-succinyllysine; alternate. Phosphoserine is present on Ser309. An N6-succinyllysine modification is found at Lys318. Ser332 and Ser333 each carry phosphoserine.

The protein belongs to the LDH/MDH superfamily. MDH type 2 family. In terms of assembly, homodimer. Post-translationally, ISGylated. Acetylation at Lys-118 dramatically enhances enzymatic activity and promotes adipogenic differentiation.

The protein resides in the cytoplasm. Its subcellular location is the cytosol. It catalyses the reaction (S)-malate + NAD(+) = oxaloacetate + NADH + H(+). It carries out the reaction (2R)-2-hydroxy-3-(4-hydroxyphenyl)propanoate + NAD(+) = 3-(4-hydroxyphenyl)pyruvate + NADH + H(+). The enzyme catalyses (S)-2-hydroxyglutarate + NAD(+) = 2-oxoglutarate + NADH + H(+). In terms of biological role, catalyzes the reduction of aromatic alpha-keto acids in the presence of NADH. Plays essential roles in the malate-aspartate shuttle and the tricarboxylic acid cycle, important in mitochondrial NADH supply for oxidative phosphorylation. Catalyzes the reduction of 2-oxoglutarate to 2-hydroxyglutarate, leading to elevated reactive oxygen species (ROS). This Rattus norvegicus (Rat) protein is Malate dehydrogenase, cytoplasmic (Mdh1).